Here is a 305-residue protein sequence, read N- to C-terminus: MEKYEKLEKVGEGTYGKVYKALEKSTGQVVALKKTRLEMDEEGVPPTALREVSLLQMLSQSLYVVRLLSVEHVDCAKNGKPLLYLVFEYLDTDLKKFIDSHRKGPNPRPLPPQQIQSFLFQLCKGVSHCHAHGVLHRDLKPQNLLLDKDKGVLKIADLGLARAFTVPLKSYTHEIVTLSYRAPEVLLGSSHYSTAVDMSSVGCIFAEMVRRQALFPGDSEFQQLLHIFRLLGTPSDEQWPGVSSLRDWHVYPQWEPQNSAPAVPSLGPDGLDLLTKTLKYDPADRISAKAALDHPYFDTLDKSQF.

The region spanning 4–297 (YEKLEKVGEG…AKAALDHPYF (294 aa)) is the Protein kinase domain. ATP is bound by residues 10 to 18 (VGEGTYGKV) and K33. The residue at position 14 (T14) is a Phosphothreonine. Residue Y15 is modified to Phosphotyrosine. The active-site Proton acceptor is the D138. Residue T172 is modified to Phosphothreonine; by CAK.

Belongs to the protein kinase superfamily. CMGC Ser/Thr protein kinase family. CDC2/CDKX subfamily.

The enzyme catalyses L-seryl-[protein] + ATP = O-phospho-L-seryl-[protein] + ADP + H(+). It carries out the reaction L-threonyl-[protein] + ATP = O-phospho-L-threonyl-[protein] + ADP + H(+). The catalysed reaction is [DNA-directed RNA polymerase] + ATP = phospho-[DNA-directed RNA polymerase] + ADP + H(+). Its function is as follows. Plays a key role in the control of the eukaryotic cell cycle. In Antirrhinum majus (Garden snapdragon), this protein is Cell division control protein 2 homolog C (CDC2C).